The following is a 572-amino-acid chain: FAD-linked oxidoreductase patO (572 aa).

The N-terminal stretch at 1 to 23 is a signal peptide; that stretch reads MRLSIYSSILLLRAMCLVRPTFG. Asparagine 48, asparagine 71, asparagine 126, asparagine 180, asparagine 309, asparagine 354, asparagine 381, asparagine 422, asparagine 446, and asparagine 481 each carry an N-linked (GlcNAc...) asparagine glycan. The region spanning 115-295 is the FAD-binding PCMH-type domain; sequence CAPGDMVVYS…YSMTVKAFPD (181 aa).

It belongs to the oxygen-dependent FAD-linked oxidoreductase family. FAD serves as cofactor.

The protein resides in the vacuole lumen. It functions in the pathway mycotoxin biosynthesis; patulin biosynthesis. In terms of biological role, FAD-linked oxidoreductase; part of the gene cluster that mediates the biosynthesis of patulin, an acetate-derived tetraketide mycotoxin produced by several fungal species that shows antimicrobial properties against several bacteria. PatO acts with patJ in the vacuole to convert gentisyl alcohol to isoepoxydon. The pathway begins with the synthesis of 6-methylsalicylic acid by the polyketide synthase (PKS) patK via condensation of acetate and malonate units. The 6-methylsalicylic acid decarboxylase patG then catalyzes the decarboxylation of 6-methylsalicylic acid to yield m-cresol (also known as 3-methylphenol). These first reactions occur in the cytosol. The intermediate m-cresol is then transported into the endoplasmic reticulum where the cytochrome P450 monooxygenase patH converts it to m-hydroxybenzyl alcohol, which is further converted to gentisyl alcohol by the cytochrome P450 monooxygenase patI. The oxidoreductases patJ and patO further convert gentisyl alcohol to isoepoxydon in the vacuole. PatN catalyzes then the transformation of isoepoxydon into phyllostine. The cluster protein patF is responsible for the conversion from phyllostine to neopatulin whereas the alcohol dehydrogenase patD converts neopatulin to E-ascladiol. The steps between isoepoxydon and E-ascladiol occur in the cytosol, and E-ascladiol is probably secreted to the extracellular space by one of the cluster-specific transporters patC or patM. Finally, the secreted patulin synthase patE catalyzes the conversion of E-ascladiol to patulin. The polypeptide is FAD-linked oxidoreductase patO (Aspergillus clavatus (strain ATCC 1007 / CBS 513.65 / DSM 816 / NCTC 3887 / NRRL 1 / QM 1276 / 107)).